The primary structure comprises 71 residues: UPF0346 protein SPP_0954 (71 aa).

The protein belongs to the UPF0346 family.

The protein is UPF0346 protein SPP_0954 of Streptococcus pneumoniae (strain P1031).